The sequence spans 342 residues: MRSTKVIHIVGCHAEGEVGDVIVGGVAPPPGETVWEQSRFIANDETLRNFVLNEPRGGVFRHVNLLVPPKDPRAQMGFIIMEPADTPPMSGSNSICVSTVLLDSGIIAMQEPVTHMVLEAPGGIIEVEAECRNGKAERISVRNVPSFADRLDAPLDVTGLGTIMVDTAYGGDSFVIVDAAQIGMKIEPGQARELAEIGVKITKAANEQLGFRHPERDWRHISFCQITEPVTREGDVLTGVNTVAIRPAKLDRSPTGTGCSARMAVLHAKGQMKAGERFIGKSVLGTEFHCRLDKVLELGGKPAISPIISGRAWVTGTSQLMLDPSDPFPHGYRLSDTWPRDE.

Residue Ser90 is the Proton acceptor of the active site. Residues 91–92, Asp251, and 256–257 contribute to the substrate site; these read GS and GT.

It belongs to the proline racemase family.

It catalyses the reaction trans-3-hydroxy-L-proline = 1-pyrroline-2-carboxylate + H2O. Catalyzes the dehydration of trans-3-hydroxy-L-proline (t3LHyp) to Delta(1)-pyrroline-2-carboxylate (Pyr2C). Displays neither proline racemase activity nor 4-hydroxyproline 2-epimerase activity. This chain is Trans-3-hydroxy-L-proline dehydratase, found in Brucella suis biovar 1 (strain 1330).